Here is a 137-residue protein sequence, read N- to C-terminus: Small ribosomal subunit protein uS9 (137 aa).

The protein belongs to the universal ribosomal protein uS9 family.

This Saccharolobus solfataricus (strain ATCC 35092 / DSM 1617 / JCM 11322 / P2) (Sulfolobus solfataricus) protein is Small ribosomal subunit protein uS9 (rps9).